We begin with the raw amino-acid sequence, 212 residues long: Interleukin-6 (212 aa).

An N-terminal signal peptide occupies residues 1-27 (MNSVSTSAFGPVAFSLGLLLVLPAAFP). C72 and C78 are disulfide-bonded. N73 carries an N-linked (GlcNAc...) asparagine glycan. The residue at position 81 (S81) is a Phosphoserine. Residues C101 and C111 are joined by a disulfide bond. Residue N172 is glycosylated (N-linked (GlcNAc...) asparagine).

The protein belongs to the IL-6 superfamily. In terms of assembly, component of a hexamer of two molecules each of IL6, IL6R and IL6ST; first binds to IL6R to associate with the signaling subunit IL6ST. Interacts with IL6R (via the N-terminal ectodomain); this interaction may be affected by IL6R-binding with SORL1, hence decreasing IL6 cis signaling. Interacts with SORL1 (via the N-terminal ectodomain); this interaction leads to IL6 internalization and lysosomal degradation. May form a trimeric complex with the soluble SORL1 ectodomain and soluble IL6R receptor; this interaction might stabilize circulating IL6, hence promoting IL6 trans signaling.

It is found in the secreted. Cytokine with a wide variety of biological functions in immunity, tissue regeneration, and metabolism. Binds to IL6R, then the complex associates to the signaling subunit IL6ST/gp130 to trigger the intracellular IL6-signaling pathway. The interaction with the membrane-bound IL6R and IL6ST stimulates 'classic signaling', whereas the binding of IL6 and soluble IL6R to IL6ST stimulates 'trans-signaling'. Alternatively, 'cluster signaling' occurs when membrane-bound IL6:IL6R complexes on transmitter cells activate IL6ST receptors on neighboring receiver cells. Its function is as follows. IL6 is a potent inducer of the acute phase response. Rapid production of IL6 contributes to host defense during infection and tissue injury, but excessive IL6 synthesis is involved in disease pathology. In the innate immune response, is synthesized by myeloid cells, such as macrophages and dendritic cells, upon recognition of pathogens through toll-like receptors (TLRs) at the site of infection or tissue injury. In the adaptive immune response, is required for the differentiation of B cells into immunoglobulin-secreting cells. Plays a major role in the differentiation of CD4(+) T cell subsets. Essential factor for the development of T follicular helper (Tfh) cells that are required for the induction of germinal-center formation. Required to drive naive CD4(+) T cells to the Th17 lineage. Also required for proliferation of myeloma cells and the survival of plasmablast cells. Functionally, acts as an essential factor in bone homeostasis and on vessels directly or indirectly by induction of VEGF, resulting in increased angiogenesis activity and vascular permeability. Induces, through 'trans-signaling' and synergistically with IL1B and TNF, the production of VEGF. Involved in metabolic controls, is discharged into the bloodstream after muscle contraction increasing lipolysis and improving insulin resistance. 'Trans-signaling' in central nervous system also regulates energy and glucose homeostasis. Mediates, through GLP-1, crosstalk between insulin-sensitive tissues, intestinal L cells and pancreatic islets to adapt to changes in insulin demand. Also acts as a myokine. Plays a protective role during liver injury, being required for maintenance of tissue regeneration. Also has a pivotal role in iron metabolism by regulating HAMP/hepcidin expression upon inflammation or bacterial infection. Through activation of IL6ST-YAP-NOTCH pathway, induces inflammation-induced epithelial regeneration. In Macaca thibetana (Pere David's macaque), this protein is Interleukin-6 (IL6).